The chain runs to 715 residues: Glycine--tRNA ligase beta subunit (715 aa).

It belongs to the class-II aminoacyl-tRNA synthetase family. As to quaternary structure, tetramer of two alpha and two beta subunits.

The protein localises to the cytoplasm. It carries out the reaction tRNA(Gly) + glycine + ATP = glycyl-tRNA(Gly) + AMP + diphosphate. In Nitrosomonas eutropha (strain DSM 101675 / C91 / Nm57), this protein is Glycine--tRNA ligase beta subunit.